The sequence spans 461 residues: E3 ubiquitin-protein ligase parkin (461 aa).

One can recognise a Ubiquitin-like domain in the interval 30-90; sequence VNIYVKSNVG…DSTVIEVLDF (61 aa). Phosphoserine is present on Ser-92. Residues 145–227 form an RING-type 0; atypical zinc finger; sequence AHFFIYCANP…SQGENDTAVP (83 aa). Zn(2+) contacts are provided by Cys-151, Cys-155, Cys-167, and Cys-170. Phosphothreonine is present on Thr-176. The Zn(2+) site is built by Cys-197, Cys-202, Cys-213, His-216, Cys-240, Cys-243, Cys-255, His-259, Cys-262, Cys-265, Cys-291, Cys-295, Cys-334, Cys-339, Cys-354, Cys-356, Cys-361, Cys-364, His-369, Cys-373, Cys-415, and Cys-418. The TRIAD supradomain stretch occupies residues 236 to 461; the sequence is KKIPCLACTD…RDCMASHWFG (226 aa). The segment at 240–295 adopts an RING-type 1 zinc-finger fold; the sequence is CLACTDICDPVLVFSCDNRHVTCLECFKNYCGSRLKDRQFLSHPDFGYTLPCPAGC. IBR-type zinc fingers lie at residues 315–373 and 411–452; these read EQYH…LGEC and LTKP…PWER. Residues 415-446 form an RING-type 2; atypical zinc finger; sequence CPKCRTSTERAGGCMHMICTRANCGFHWCWVC. Cys-428 is an active-site residue. Positions 433, 438, 443, 446, 454, and 458 each coordinate Zn(2+).

The protein belongs to the RBR family. Parkin subfamily. Forms an E3 ubiquitin ligase complex with E2 ubiquitin-conjugating enzymes. Post-translationally, auto-ubiquitinates in an E2-dependent manner leading to its own degradation. Phosphorylated. Activation requires phosphorylation at Ser-92 by Pink1 and binding to Pink1-phosphorylated polyubiquitin chains. Phosphorylation at Thr-176 by Pink1 is also important for mitochondrial localization.

It is found in the mitochondrion. It localises to the cytoplasm. Its subcellular location is the cytosol. The enzyme catalyses [E2 ubiquitin-conjugating enzyme]-S-ubiquitinyl-L-cysteine + [acceptor protein]-L-lysine = [E2 ubiquitin-conjugating enzyme]-L-cysteine + [acceptor protein]-N(6)-ubiquitinyl-L-lysine.. It participates in protein modification; protein ubiquitination. Its activity is regulated as follows. In the autoinhibited state the side chain of Phe-460 inserts into a hydrophobic groove in RING-0, occluding the ubiquitin acceptor site Cys-428, whereas the REP repressor element binds RING-1 and blocks its E2-binding site. Activation of park requires 2 steps: (1) phosphorylation at Ser-92 by Pink1 and (2) binding to phosphorylated ubiquitin, leading to unlock repression of the catalytic Cys-428 by the RING-0 region via an allosteric mechanism and converting park to its fully-active form. According to another report, phosphorylation at Ser-92 by Pink1 is not essential for activation and only binding to phosphorylated ubiquitin is essential to unlock repression. Its function is as follows. E3 ubiquitin-protein ligase which accepts ubiquitin from E2 ubiquitin-conjugating enzymes in the form of a thioester and then directly transfers the ubiquitin to targeted substrates, such as Marf, Opa1, Sep1, Tom20 and porin. Mediates monoubiquitination as well as 'Lys-6', 'Lys-11', 'Lys-48'-linked and 'Lys-63'-linked polyubiquitination of substrates, depending on the context. Protects against mitochondrial dysfunction during cellular stress, by acting downstream of Pink1, to coordinate mitochondrial quality control mechanisms that remove and replace dysfunctional mitochondrial components. Depending on the severity of mitochondrial damage and/or dysfunction, activity ranges from preventing apoptosis and stimulating mitochondrial biogenesis to regulating mitochondrial dynamics and eliminating severely damaged mitochondria via mitophagy. Appears to be particularly important in maintaining the physiology and function of cells with high energy demands that are undergoing stress or altered metabolic environment, including spermatids, muscle cells and neurons such as the dopaminergic (DA) neurons. Activation and recruitment onto the outer membrane of damaged/dysfunctional mitochondria (OMM) requires Pink1-mediated phosphorylation of both park and ubiquitin. In depolarized mitochondria, mediates the decision between mitophagy or preventing apoptosis by inducing either the poly- or monoubiquitination of porin/VDAC; polyubiquitination of porin promotes mitophagy, while monoubiquitination of porin decreases mitochondrial calcium influx which ultimately inhibits apoptosis. When cellular stress results in irreversible mitochondrial damage, promotes the autophagic degradation of dysfunctional depolarized mitochondria (mitophagy) by promoting the ubiquitination of mitochondrial proteins. Preferentially assembles 'Lys-6'-, 'Lys-11'- and 'Lys-63'-linked polyubiquitin chains following mitochondrial damage, leading to mitophagy. In developing tissues, inhibits JNK-mediated apoptosis by negatively regulating bsk transcription. The Pink1-park pathway also promotes fission and/or inhibits fusion of damaged mitochondria by mediating the ubiquitination and subsequent degradation of proteins involved in mitochondrial fusion/fission such as Marf and Opa1. This prevents the refusion of unhealthy mitochondria with the healthy mitochondrial network and/or initiates mitochondrial fragmentation facilitating their later engulfment by autophagosomes. Regulates motility of damaged mitochondria by phosphorylating Miro which likely promotes its park-dependent degradation by the proteasome; in motor neurons, this inhibits mitochondrial intracellular anterograde transport along the axons which probably increases the chance of the mitochondria being eliminated in the soma. The Pink1-park pathway is also involved in mitochondrial regeneration processes such as promoting mitochondrial biogenesis, activating localized mitochondrial repair, promoting selective turnover of mitochondrial proteins and initiating the mitochondrial import of endogenous proteins. Involved in mitochondrial biogenesis via the ubiquitination of transcriptional repressor Paris which leads to its subsequent proteasomal degradation and allows activation of the transcription factor srl. Promotes localized mitochondrial repair by activating the translation of specific nuclear-encoded mitochondrial RNAs (nc-mtRNAs) on the mitochondrial surface, including several key electron transport chain component nc-mtRNAs. This is E3 ubiquitin-protein ligase parkin from Pediculus humanus subsp. corporis (Body louse).